The following is a 411-amino-acid chain: MGNTDDVKAVKPEKLSSPPPPAAPDQSNSHVYPDWAAMQAYYGPRVALPPYFNPAVASGQSPHPYMWGPPQPVMPPYGVPYAALYAHGGVYAHPGVPLAASPMSMDTHAKSSGTNEHGLIKKLKGHDDLAMSIGNGKADSSEGEMERTLSQSKETEGSSDGSNENSKRAAVNGRKRGRDEAPNMIGEVKIETQSSVIPSPRAKSEKLLGITVATPMVAGKVVGTVVSPSMTSSLELKDSPKEHAVNSPAGGQQPSTMMPNDSWLHNDRDLKRERRKQSNRESARRSRLRKQAEAEELAIKVDSLTAENMALKAEINRLTLTAEKLTNDNSRLLEVMKNAQAERAADVGLGNNNEKKASTLSTANLLSRVDNAGSGDRDEGESDVYEKTTKSGAKLHQLLDANPRTDAVAAG.

The span at 1–14 (MGNTDDVKAVKPEK) shows a compositional bias: basic and acidic residues. Disordered stretches follow at residues 1–30 (MGNT…SNSH), 130–197 (AMSI…SSVI), and 232–293 (SSLE…KQAE). Positions 148 to 164 (TLSQSKETEGSSDGSNE) are enriched in polar residues. Residues 235–244 (ELKDSPKEHA) are compositionally biased toward basic and acidic residues. Positions 249–259 (AGGQQPSTMMP) are enriched in polar residues. A compositionally biased stretch (basic and acidic residues) spans 264-293 (LHNDRDLKRERRKQSNRESARRSRLRKQAE). The region spanning 269–332 (DLKRERRKQS…EKLTNDNSRL (64 aa)) is the bZIP domain. Residues 271 to 290 (KRERRKQSNRESARRSRLRK) are basic motif. The interval 297-332 (LAIKVDSLTAENMALKAEINRLTLTAEKLTNDNSRL) is leucine-zipper. The interval 346-411 (DVGLGNNNEK…NPRTDAVAAG (66 aa)) is disordered.

It belongs to the bZIP family. In terms of assembly, binds DNA as a dimer.

It is found in the nucleus. Functionally, binds to the G-box-like motif (5'-ACGTGGC-3') of the chalcone synthase (CHS) gene promoter. G-box and G-box-like motifs are defined in promoters of certain plant genes which are regulated by such diverse stimuli as light-induction or hormone control. The polypeptide is Common plant regulatory factor 1 (CPRF1) (Petroselinum crispum (Parsley)).